Here is a 330-residue protein sequence, read N- to C-terminus: DNA-directed RNA polymerase subunit alpha (330 aa).

The segment at 1-232 (MAILAFQKPD…YHFMLFSDEK (232 aa)) is alpha N-terminal domain (alpha-NTD). The interval 248-330 (EEVLHMRQLL…DISKYKLDKE (83 aa)) is alpha C-terminal domain (alpha-CTD).

This sequence belongs to the RNA polymerase alpha chain family. Homodimer. The RNAP catalytic core consists of 2 alpha, 1 beta, 1 beta' and 1 omega subunit. When a sigma factor is associated with the core the holoenzyme is formed, which can initiate transcription.

The enzyme catalyses RNA(n) + a ribonucleoside 5'-triphosphate = RNA(n+1) + diphosphate. DNA-dependent RNA polymerase catalyzes the transcription of DNA into RNA using the four ribonucleoside triphosphates as substrates. This chain is DNA-directed RNA polymerase subunit alpha, found in Bacteroides thetaiotaomicron (strain ATCC 29148 / DSM 2079 / JCM 5827 / CCUG 10774 / NCTC 10582 / VPI-5482 / E50).